The following is a 145-amino-acid chain: Putative pre-16S rRNA nuclease (145 aa).

Belongs to the YqgF nuclease family.

Its subcellular location is the cytoplasm. Could be a nuclease involved in processing of the 5'-end of pre-16S rRNA. In Tropheryma whipplei (strain Twist) (Whipple's bacillus), this protein is Putative pre-16S rRNA nuclease.